Reading from the N-terminus, the 245-residue chain is Cytochrome c oxidase subunit 2 (245 aa).

The Mitochondrial intermembrane segment spans residues 1-36; the sequence is MYMLNNMLNDVPTPWGMFFQDSATPNMEGMMELHNN. Residues 37-56 form a helical membrane-spanning segment; that stretch reads VMFYLCMMLGFVSYMLYNML. Residues 57 to 76 are Mitochondrial matrix-facing; sequence TTYNHSVLPYKYLYHGQFIE. The chain crosses the membrane as a helical span at residues 77–101; that stretch reads IVWTTFPAMILLIIAFPSFILLYIC. At 102–245 the chain is on the mitochondrial intermembrane side; that stretch reads DEVIAPAMTI…GEFLAWIDEQ (144 aa). Cu cation contacts are provided by His-180, Cys-215, Glu-217, Cys-219, His-223, and Met-226. A Mg(2+)-binding site is contributed by Glu-217.

The protein belongs to the cytochrome c oxidase subunit 2 family. As to quaternary structure, component of the cytochrome c oxidase (complex IV, CIV), a multisubunit enzyme composed of a catalytic core of 3 subunits and several supernumerary subunits. The complex exists as a monomer or a dimer and forms supercomplexes (SCs) in the inner mitochondrial membrane with ubiquinol-cytochrome c oxidoreductase (cytochrome b-c1 complex, complex III, CIII). Cu cation is required as a cofactor.

The protein resides in the mitochondrion inner membrane. The catalysed reaction is 4 Fe(II)-[cytochrome c] + O2 + 8 H(+)(in) = 4 Fe(III)-[cytochrome c] + 2 H2O + 4 H(+)(out). Component of the cytochrome c oxidase, the last enzyme in the mitochondrial electron transport chain which drives oxidative phosphorylation. The respiratory chain contains 3 multisubunit complexes succinate dehydrogenase (complex II, CII), ubiquinol-cytochrome c oxidoreductase (cytochrome b-c1 complex, complex III, CIII) and cytochrome c oxidase (complex IV, CIV), that cooperate to transfer electrons derived from NADH and succinate to molecular oxygen, creating an electrochemical gradient over the inner membrane that drives transmembrane transport and the ATP synthase. Cytochrome c oxidase is the component of the respiratory chain that catalyzes the reduction of oxygen to water. Electrons originating from reduced cytochrome c in the intermembrane space (IMS) are transferred via the dinuclear copper A center (CU(A)) of subunit 2 and heme A of subunit 1 to the active site in subunit 1, a binuclear center (BNC) formed by heme A3 and copper B (CU(B)). The BNC reduces molecular oxygen to 2 water molecules using 4 electrons from cytochrome c in the IMS and 4 protons from the mitochondrial matrix. This is Cytochrome c oxidase subunit 2 (COX2) from Dekkera bruxellensis (Brettanomyces custersii).